A 625-amino-acid polypeptide reads, in one-letter code: Putative surface protein bspA-like (625 aa).

The Extracellular segment spans residues 1-548 (MMTPGKSSKT…KAIKGGEIAG (548 aa)). Asn-15 carries an N-linked (GlcNAc...) asparagine glycan. LRR repeat units follow at residues 38-60 (CSSF…AFTG), 61-83 (CSSL…AFSE), 85-106 (SSIT…AFSG), 107-129 (CSKL…AFRG), 153-175 (CSSL…AFYG), 176-198 (CSSL…AFQE), 200-221 (SKLT…AFKR), 222-245 (CSSL…FYEC), 247-267 (KLTS…AFSK), 271-293 (LTSI…VFLN), 325-347 (IPKS…TLTH), 348-368 (FTNL…PESF), and 369-392 (IEGD…AFKD). N-linked (GlcNAc...) asparagine glycosylation is present at Asn-227. Positions 439-538 (KQSEENPNQP…TDDPSKSKEN (100 aa)) are disordered. Positions 443 to 526 (ENPNQPGENP…QPGENPSQPG (84 aa)) are enriched in low complexity. The chain crosses the membrane as a helical span at residues 549–571 (IIIGSLIGICLVVAICFGVYYYF). Residues 572–625 (MRIKPKNKNDDNEGNQEDTIANGTNEVTNENVLATFDEQPNNESDSNGLDSAEV) are Cytoplasmic-facing. Positions 577–625 (KNKNDDNEGNQEDTIANGTNEVTNENVLATFDEQPNNESDSNGLDSAEV) are disordered. Positions 588 to 625 (EDTIANGTNEVTNENVLATFDEQPNNESDSNGLDSAEV) are enriched in polar residues.

It localises to the cell membrane. Its function is as follows. May bind host tissue. The polypeptide is Putative surface protein bspA-like (BSPAL1) (Trichomonas vaginalis).